The sequence spans 215 residues: Ubiquitin-conjugating enzyme E2 S (215 aa).

One can recognise a UBC core domain in the interval 9-155 (DVIKRVVKEL…AKLFTSIHAS (147 aa)). Cys93 serves as the catalytic Glycyl thioester intermediate. Residues 159-215 (IDSNNNNENSTTTPTTTTTATTPSTNTASISSPVKKKTETTNSTTTKVQPKKSLKRL) are disordered. A compositionally biased stretch (low complexity) spans 161-190 (SNNNNENSTTTPTTTTTATTPSTNTASISS).

Belongs to the ubiquitin-conjugating enzyme family.

It carries out the reaction S-ubiquitinyl-[E1 ubiquitin-activating enzyme]-L-cysteine + [E2 ubiquitin-conjugating enzyme]-L-cysteine = [E1 ubiquitin-activating enzyme]-L-cysteine + S-ubiquitinyl-[E2 ubiquitin-conjugating enzyme]-L-cysteine.. It participates in protein modification; protein ubiquitination. In terms of biological role, catalyzes the covalent attachment of ubiquitin to other proteins. Acts as an essential factor of the anaphase promoting complex/cyclosome (APC/C), a cell cycle-regulated ubiquitin ligase that controls progression through mitosis. Acts by specifically elongating polyubiquitin chains initiated by the E2 enzyme ubch10 on APC/C substrates, enhancing the degradation of APC/C substrates by the proteasome and promoting mitotic exit. In Dictyostelium discoideum (Social amoeba), this protein is Ubiquitin-conjugating enzyme E2 S (ube2s).